The following is a 356-amino-acid chain: WAT1-related protein At1g68170 (356 aa).

Helical transmembrane passes span 4 to 24 (ITAM…FKLA), 33 to 53 (VLVA…CFIF), 65 to 85 (LMLL…ILTI), 94 to 114 (TFTS…AALL), 125 to 145 (VGLA…VFIF), 176 to 196 (ISIL…LWFL), 210 to 230 (WNAT…ALCW), 245 to 265 (LLTI…VNAW), 273 to 293 (LFVS…GSFL), and 298 to 318 (LHLG…IVLW). EamA domains follow at residues 14-142 (TAGL…GALV) and 191-317 (ISLW…YIVL).

This sequence belongs to the drug/metabolite transporter (DMT) superfamily. Plant drug/metabolite exporter (P-DME) (TC 2.A.7.4) family.

The protein localises to the membrane. The sequence is that of WAT1-related protein At1g68170 from Arabidopsis thaliana (Mouse-ear cress).